Reading from the N-terminus, the 614-residue chain is Phosphomethylpyrimidine synthase (614 aa).

Residues asparagine 230, methionine 259, tyrosine 288, histidine 324, serine 344–glycine 346, aspartate 385–arginine 388, and glutamate 424 each bind substrate. Histidine 428 contributes to the Zn(2+) binding site. Tyrosine 451 contributes to the substrate binding site. Position 492 (histidine 492) interacts with Zn(2+). Cysteine 572, cysteine 575, and cysteine 580 together coordinate [4Fe-4S] cluster.

Belongs to the ThiC family. Homodimer. [4Fe-4S] cluster serves as cofactor.

The catalysed reaction is 5-amino-1-(5-phospho-beta-D-ribosyl)imidazole + S-adenosyl-L-methionine = 4-amino-2-methyl-5-(phosphooxymethyl)pyrimidine + CO + 5'-deoxyadenosine + formate + L-methionine + 3 H(+). It participates in cofactor biosynthesis; thiamine diphosphate biosynthesis. Functionally, catalyzes the synthesis of the hydroxymethylpyrimidine phosphate (HMP-P) moiety of thiamine from aminoimidazole ribotide (AIR) in a radical S-adenosyl-L-methionine (SAM)-dependent reaction. This Stenotrophomonas maltophilia (strain K279a) protein is Phosphomethylpyrimidine synthase.